A 673-amino-acid chain; its full sequence is G-protein-signaling modulator 1 (673 aa).

A mediates association with membranes region spans residues 1–507; the sequence is MASPAPPVAE…DLLSKFQSSR (507 aa). TPR repeat units follow at residues 28-61, 66-99, 106-139, 146-178, 180-199, 206-239, 246-279, 286-319, and 326-359; these read CLELALEGERLCKAGDFKAGVAFFEAAVQVGTED, SAIYSQLGNAYFYLKEYARALQFHKHDLLLARTI, AKASGNLGNTLKVLGRFDEAIVCCQRHLDIAQEQ, ARALYNIGNVYHAKGKQLSWNAAQDPGHLPPDV, ETLHRASEFYERNLSLVKEL, GRAYGNLGNTHYLLGNFTEATTFHKERLAIAKEF, RRAYSNLGNAHIFLGRFDVAAEHYKKTLQLSRQL, AQACYSLGNTYTLLQDYERAAEYHLRHLVIAQEL, and GRACWSLGNAYVSMGSPAQALTFAKKHLQISQEI. The segment at 361 to 485 is interaction with STK11/LKB1; it reads DRNGELTARM…VRVQVPRTGI (125 aa). Position 410 is a phosphoserine (serine 410). The residue at position 418 (arginine 418) is an Omega-N-methylarginine. Residues 420–439 are compositionally biased toward basic and acidic residues; sequence PLDREQNGETHHTGDWRGPG. Residues 420–475 are disordered; the sequence is PLDREQNGETHHTGDWRGPGRDSLPLPMRSRKYQEGPDAIERRPREGSHSPLDSAD. A phosphoserine mark is found at serine 442, serine 467, serine 469, serine 490, and serine 491. The span at 451-467 shows a compositional bias: basic and acidic residues; sequence KYQEGPDAIERRPREGS. The region spanning 493–515 is the GoLoco 1 domain; it reads EECFFDLLSKFQSSRMDDQRCPL. The disordered stretch occupies residues 508 to 531; the sequence is MDDQRCPLEEGQAGAAEATAAPSV. Positions 516–528 are enriched in low complexity; it reads EEGQAGAAEATAA. A phosphoserine mark is found at serine 543 and serine 567. 3 consecutive GoLoco domains span residues 546–568, 594–616, and 628–650; these read TEEFFDLIASSQSRRLDDQRASV, GDEFFNMLIKYQSSRIDDQRCPP, and DEDFFSLIQRVQAKRMDEQRVDL. A disordered region spans residues 644-673; it reads DEQRVDLAGSPEQEASGLPDPQQQCPPGAS. Serine 653 carries the phosphoserine modification. Positions 664-673 are enriched in polar residues; it reads PQQQCPPGAS.

It belongs to the GPSM family. Interacts with GNAI1 and GNAI2 preferentially in their GDP-bound state. May also interact with GNAO1. Interacts with INSC/inscuteable and FRMPD1. Interacts with GNAI3. Interacts with STK11/LKB1 and MACF1. Phosphorylation regulates interaction with G(i/o) alpha. As to expression, expressed in neural progenitor cells (at protein level).

Its subcellular location is the cytoplasm. The protein localises to the cytosol. It localises to the endoplasmic reticulum membrane. It is found in the golgi apparatus membrane. The protein resides in the cell membrane. Functionally, guanine nucleotide dissociation inhibitor (GDI) which functions as a receptor-independent activator of heterotrimeric G-protein signaling. Keeps G(i/o) alpha subunit in its GDP-bound form thus uncoupling heterotrimeric G-proteins signaling from G protein-coupled receptors. Controls spindle orientation and asymmetric cell fate of cerebral cortical progenitors. May also be involved in macroautophagy in intestinal cells. May play a role in drug addiction. The protein is G-protein-signaling modulator 1 (Gpsm1) of Mus musculus (Mouse).